A 211-amino-acid chain; its full sequence is uncharacterized protein (211 aa).

Residues 1–20 form the signal peptide; that stretch reads MSRVQISTVLAIDTATPAVT.

The protein to M.leprae ML0378.

This is an uncharacterized protein from Mycobacterium tuberculosis (strain CDC 1551 / Oshkosh).